A 424-amino-acid chain; its full sequence is Trigger factor (424 aa).

The PPIase FKBP-type domain maps to 163-248; it reads GDTVVLDFEG…IHEIKAKELP (86 aa).

It belongs to the FKBP-type PPIase family. Tig subfamily.

Its subcellular location is the cytoplasm. It catalyses the reaction [protein]-peptidylproline (omega=180) = [protein]-peptidylproline (omega=0). In terms of biological role, involved in protein export. Acts as a chaperone by maintaining the newly synthesized protein in an open conformation. Functions as a peptidyl-prolyl cis-trans isomerase. In Bacillus pumilus (strain SAFR-032), this protein is Trigger factor.